Consider the following 329-residue polypeptide: Quinone oxidoreductase (329 aa).

Ala-2 carries the post-translational modification N-acetylalanine. Lys-23 is subject to N6-acetyllysine. Residues Tyr-53, 158–161, Gly-181, His-200, Asn-229, 246–249, and 269–271 each bind NADP(+); these read SGGV, VGSR, and VTL. Residue Ser-248 is modified to Phosphoserine. An N6-succinyllysine modification is found at Lys-296.

This sequence belongs to the zinc-containing alcohol dehydrogenase family. Quinone oxidoreductase subfamily. Homotetramer. Only very low amounts in the lens.

Its subcellular location is the cytoplasm. The catalysed reaction is 2 a quinone + NADPH + H(+) = 2 a 1,4-benzosemiquinone + NADP(+). In terms of biological role, does not have alcohol dehydrogenase activity. Binds NADP and acts through a one-electron transfer process. Orthoquinones, such as 1,2-naphthoquinone or 9,10-phenanthrenequinone, are the best substrates (in vitro). May act in the detoxification of xenobiotics. Interacts with (AU)-rich elements (ARE) in the 3'-UTR of target mRNA species. Enhances the stability of mRNA coding for BCL2. NADPH binding interferes with mRNA binding. In Homo sapiens (Human), this protein is Quinone oxidoreductase (CRYZ).